Consider the following 146-residue polypeptide: Leghemoglobin (146 aa).

Residues 3–146 (AFTEKQEALV…FAAGIKKAYA (144 aa)) enclose the Globin domain. 2 positions are modified to nitrated tyrosine: Y26 and Y31. S46 contributes to the heme b binding site. Residue S46 is modified to Phosphoserine. H62 contributes to the O2 binding site. Heme b contacts are provided by H93 and K96. Y134 is subject to Nitrated tyrosine.

The protein belongs to the plant globin family. Monomer. In terms of processing, nitrated mainly at Tyr-31 and, to a lower extent, at Tyr-26 and Tyr-134, in effective nodules and particularly in hypoxic conditions; this mechanism may play a protective role in the symbiosis by buffering toxic peroxynitrite NO(2)(-). Nitration level decrease during nodule senescence. Post-translationally, phosphorylation at Ser-46 disrupts the molecular environment of its porphyrin ring oxygen binding pocket, thus leading to a reduced oxygen consumption and to the delivery of oxygen O(2) to symbiosomes. In terms of tissue distribution, root nodules.

The protein resides in the cytoplasm. The protein localises to the cytosol. It localises to the nucleus. Its function is as follows. Leghemoglobin that reversibly binds oxygen O(2) through a pentacoordinated heme iron. In root nodules, facilitates the diffusion of oxygen to the bacteroids while preventing the bacterial nitrogenase from being inactivated by buffering dioxygen, nitric oxide and carbon monoxide, and promoting the formation of reactive oxygen species (ROS, e.g. H(2)O(2)). This role is essential for symbiotic nitrogen fixation (SNF). The sequence is that of Leghemoglobin from Phaseolus vulgaris (Kidney bean).